We begin with the raw amino-acid sequence, 252 residues long: Adenosylcobinamide-GDP ribazoletransferase (252 aa).

7 helical membrane-spanning segments follow: residues 36–56, 59–79, 109–129, 133–153, 170–192, 199–218, and 228–248; these read LVPI…MLLV, FFYK…TGGI, VGTN…VILT, PAYM…GSIV, SFID…VIFL, GYII…KYFT, and ILGA…YAVL.

This sequence belongs to the CobS family. The cofactor is Mg(2+).

The protein localises to the cell membrane. The catalysed reaction is alpha-ribazole + adenosylcob(III)inamide-GDP = adenosylcob(III)alamin + GMP + H(+). It carries out the reaction alpha-ribazole 5'-phosphate + adenosylcob(III)inamide-GDP = adenosylcob(III)alamin 5'-phosphate + GMP + H(+). It participates in cofactor biosynthesis; adenosylcobalamin biosynthesis; adenosylcobalamin from cob(II)yrinate a,c-diamide: step 7/7. In terms of biological role, joins adenosylcobinamide-GDP and alpha-ribazole to generate adenosylcobalamin (Ado-cobalamin). Also synthesizes adenosylcobalamin 5'-phosphate from adenosylcobinamide-GDP and alpha-ribazole 5'-phosphate. The polypeptide is Adenosylcobinamide-GDP ribazoletransferase (Clostridium acetobutylicum (strain ATCC 824 / DSM 792 / JCM 1419 / IAM 19013 / LMG 5710 / NBRC 13948 / NRRL B-527 / VKM B-1787 / 2291 / W)).